A 268-amino-acid polypeptide reads, in one-letter code: Taurine import ATP-binding protein TauB (268 aa).

Residues 4–236 form the ABC transporter domain; that stretch reads LAIRNISMRF…EGVDADLREV (233 aa). 41-48 serves as a coordination point for ATP; that stretch reads GPSGCGKT.

This sequence belongs to the ABC transporter superfamily. Taurine importer (TC 3.A.1.17.1) family. The complex is composed of two ATP-binding proteins (TauB), two transmembrane proteins (TauC) and a solute-binding protein (TauA).

It localises to the cell inner membrane. The catalysed reaction is taurine(out) + ATP + H2O = taurine(in) + ADP + phosphate + H(+). Its function is as follows. Part of the ABC transporter complex TauABC involved in taurine import. Responsible for energy coupling to the transport system. The protein is Taurine import ATP-binding protein TauB of Jannaschia sp. (strain CCS1).